A 120-amino-acid chain; its full sequence is Large ribosomal subunit protein uL18 (120 aa).

Belongs to the universal ribosomal protein uL18 family. As to quaternary structure, part of the 50S ribosomal subunit; part of the 5S rRNA/L5/L18/L25 subcomplex. Contacts the 5S and 23S rRNAs.

Its function is as follows. This is one of the proteins that bind and probably mediate the attachment of the 5S RNA into the large ribosomal subunit, where it forms part of the central protuberance. In Chloroherpeton thalassium (strain ATCC 35110 / GB-78), this protein is Large ribosomal subunit protein uL18.